The chain runs to 378 residues: D-alanine--D-alanine ligase (378 aa).

The 226-residue stretch at 149–374 folds into the ATP-grasp domain; that stretch reads KVLLRAAGIP…FRTVVTDLIE (226 aa). 189–247 serves as a coordination point for ATP; that stretch reads EAGLQYPLFVKPSRAGSSFGVTKVEQIGDAAALAAAVFEASRHDWRVLVEQGIDAREIE. Mg(2+) is bound by residues Asp328, Glu341, and Asn343.

Belongs to the D-alanine--D-alanine ligase family. Mg(2+) serves as cofactor. Mn(2+) is required as a cofactor.

The protein localises to the cytoplasm. It catalyses the reaction 2 D-alanine + ATP = D-alanyl-D-alanine + ADP + phosphate + H(+). It functions in the pathway cell wall biogenesis; peptidoglycan biosynthesis. Its function is as follows. Cell wall formation. The chain is D-alanine--D-alanine ligase from Bifidobacterium animalis subsp. lactis (strain AD011).